The chain runs to 430 residues: Protein DSE3 (430 aa).

The residue at position 395 (S395) is a Phosphoserine.

It is found in the bud neck. Functionally, may be involved in the establishment of the daughter fate. The chain is Protein DSE3 (DSE3) from Saccharomyces cerevisiae (strain ATCC 204508 / S288c) (Baker's yeast).